The primary structure comprises 276 residues: Ribosomal RNA small subunit methyltransferase J (276 aa).

S-adenosyl-L-methionine-binding positions include 135-136 (ER) and Asp-191.

Belongs to the methyltransferase superfamily. RsmJ family.

The protein resides in the cytoplasm. It carries out the reaction guanosine(1516) in 16S rRNA + S-adenosyl-L-methionine = N(2)-methylguanosine(1516) in 16S rRNA + S-adenosyl-L-homocysteine + H(+). Functionally, specifically methylates the guanosine in position 1516 of 16S rRNA. The polypeptide is Ribosomal RNA small subunit methyltransferase J (Hydrogenovibrio crunogenus (strain DSM 25203 / XCL-2) (Thiomicrospira crunogena)).